A 439-amino-acid chain; its full sequence is Arginine biosynthesis bifunctional protein ArgJ, mitochondrial (439 aa).

Positions 175, 201, 212, 301, 434, and 439 each coordinate substrate. Threonine 212 functions as the Nucleophile in the catalytic mechanism.

This sequence belongs to the ArgJ family. Heterodimer of an alpha and a beta chain. In terms of processing, the alpha and beta chains are autoproteolytically processed from a single precursor protein within the mitochondrion.

The protein localises to the mitochondrion matrix. The catalysed reaction is N(2)-acetyl-L-ornithine + L-glutamate = N-acetyl-L-glutamate + L-ornithine. The enzyme catalyses L-glutamate + acetyl-CoA = N-acetyl-L-glutamate + CoA + H(+). The protein operates within amino-acid biosynthesis; L-arginine biosynthesis; L-ornithine and N-acetyl-L-glutamate from L-glutamate and N(2)-acetyl-L-ornithine (cyclic): step 1/1. It functions in the pathway amino-acid biosynthesis; L-arginine biosynthesis; N(2)-acetyl-L-ornithine from L-glutamate: step 1/4. Its function is as follows. Catalyzes two activities which are involved in the cyclic version of arginine biosynthesis: the synthesis of acetylglutamate from glutamate and acetyl-CoA, and of ornithine by transacetylation between acetylornithine and glutamate. The polypeptide is Arginine biosynthesis bifunctional protein ArgJ, mitochondrial (Candida albicans (strain WO-1) (Yeast)).